The primary structure comprises 313 residues: Ribosomal RNA small subunit methyltransferase H (313 aa).

Residues 35–37 (GGH), aspartate 55, phenylalanine 79, aspartate 100, and glutamine 107 each bind S-adenosyl-L-methionine.

Belongs to the methyltransferase superfamily. RsmH family.

It localises to the cytoplasm. It catalyses the reaction cytidine(1402) in 16S rRNA + S-adenosyl-L-methionine = N(4)-methylcytidine(1402) in 16S rRNA + S-adenosyl-L-homocysteine + H(+). In terms of biological role, specifically methylates the N4 position of cytidine in position 1402 (C1402) of 16S rRNA. This is Ribosomal RNA small subunit methyltransferase H from Burkholderia orbicola (strain AU 1054).